Reading from the N-terminus, the 1149-residue chain is Guanine nucleotide exchange factor DBS (1149 aa).

Positions 52-224 (AATASDEIMH…DLGGTLDYCH (173 aa)) constitute a CRAL-TRIO domain. The Spectrin repeat unit spans residues 351–456 (LQLRHFEQGF…VTRRRGLLSK (106 aa)). Ser-457, Ser-462, Ser-471, and Ser-480 each carry phosphoserine. A coiled-coil region spans residues 503-529 (LETGAENKIQELNEIYKEYECILNQDL). The interval 555-627 (KKLAAKQTRP…RTSSTGEEEE (73 aa)) is disordered. The span at 583 to 594 (PGSWRSSENSSS) shows a compositional bias: low complexity. Basic and acidic residues predominate over residues 607–616 (AKSEMSEPRQ). Ser-621 is modified (phosphoserine). The residue at position 622 (Thr-622) is a Phosphothreonine. Residues 632–812 (LRRHVMNELL…LGILKAVNDS (181 aa)) enclose the DH domain. A PH domain is found at 841 to 950 (TDHKKGHTKV…IRKVLTSQLQ (110 aa)). A disordered region spans residues 956–1033 (SQHRALEQSH…EAPEEDGGWS (78 aa)). Over residues 966-978 (SLPLPTPSSTSPT) the composition is skewed to low complexity. Ser-1033, Ser-1034, Ser-1041, and Ser-1042 each carry phosphoserine. An SH3 domain is found at 1055-1116 (LVPGKYTVVM…PASSLSTLLG (62 aa)).

It belongs to the MCF2 family. Interacts with GTP-bound RAC1. Interacts with CDC42. Interacts with RHOA. Interacts with CCPG1, which results in specific inhibition of its exchange activity toward RHOA, but does not affect its activity on CDC42. As to expression, expressed at low levels in several hemopoietic cell lines and in thymus and spleen, and at higher levels in other tissues, particularly in brain.

The protein localises to the cytoplasm. It localises to the cell membrane. Its function is as follows. Guanine nucleotide exchange factor that catalyzes guanine nucleotide exchange on RHOA and CDC42, and thereby contributes to the regulation of RHOA and CDC42 signaling pathways. Seems to lack activity with RAC1. Becomes activated and highly tumorigenic by truncation of the N-terminus. The protein is Guanine nucleotide exchange factor DBS (Mcf2l) of Mus musculus (Mouse).